A 75-amino-acid polypeptide reads, in one-letter code: ATP synthase subunit c (75 aa).

Helical transmembrane passes span 9-29 (IGAG…GIIF) and 54-74 (FALA…ILFA).

It belongs to the ATPase C chain family. F-type ATPases have 2 components, F(1) - the catalytic core - and F(0) - the membrane proton channel. F(1) has five subunits: alpha(3), beta(3), gamma(1), delta(1), epsilon(1). F(0) has three main subunits: a(1), b(2) and c(10-14). The alpha and beta chains form an alternating ring which encloses part of the gamma chain. F(1) is attached to F(0) by a central stalk formed by the gamma and epsilon chains, while a peripheral stalk is formed by the delta and b chains.

Its subcellular location is the cell inner membrane. In terms of biological role, f(1)F(0) ATP synthase produces ATP from ADP in the presence of a proton or sodium gradient. F-type ATPases consist of two structural domains, F(1) containing the extramembraneous catalytic core and F(0) containing the membrane proton channel, linked together by a central stalk and a peripheral stalk. During catalysis, ATP synthesis in the catalytic domain of F(1) is coupled via a rotary mechanism of the central stalk subunits to proton translocation. Its function is as follows. Key component of the F(0) channel; it plays a direct role in translocation across the membrane. A homomeric c-ring of between 10-14 subunits forms the central stalk rotor element with the F(1) delta and epsilon subunits. In Pelagibacter ubique (strain HTCC1062), this protein is ATP synthase subunit c.